The sequence spans 115 residues: uncharacterized protein (115 aa).

This sequence belongs to the herpesviridae BLRF2 family.

This is an uncharacterized protein from Saimiriine herpesvirus 2 (strain 11) (SaHV-2).